Reading from the N-terminus, the 176-residue chain is COA8 family protein CG14806, mitochondrial (176 aa).

The transit peptide at 1 to 23 (MNKCFRCQPRISLFQFSLPRCYA) directs the protein to the mitochondrion.

This sequence belongs to the COA8 family.

The protein resides in the mitochondrion inner membrane. Its function is as follows. May be required for cytochrome c complex (COX) assembly and function, COX being the terminal component of the mitochondrial respiratory chain. (Microbial infection) Required for optimal replication of E.chaffeensis. The polypeptide is COA8 family protein CG14806, mitochondrial (Drosophila melanogaster (Fruit fly)).